We begin with the raw amino-acid sequence, 378 residues long: tRNA-specific 2-thiouridylase MnmA (378 aa).

ATP contacts are provided by residues G9–S16 and M35. Residues N94–D96 form an interaction with target base in tRNA region. The active-site Nucleophile is C99. Cysteines 99 and 195 form a disulfide. G123 is a binding site for ATP. The segment at K145–Q147 is interaction with tRNA. C195 serves as the catalytic Cysteine persulfide intermediate. The interval R307–Y308 is interaction with tRNA.

This sequence belongs to the MnmA/TRMU family.

It localises to the cytoplasm. The enzyme catalyses S-sulfanyl-L-cysteinyl-[protein] + uridine(34) in tRNA + AH2 + ATP = 2-thiouridine(34) in tRNA + L-cysteinyl-[protein] + A + AMP + diphosphate + H(+). In terms of biological role, catalyzes the 2-thiolation of uridine at the wobble position (U34) of tRNA, leading to the formation of s(2)U34. The sequence is that of tRNA-specific 2-thiouridylase MnmA from Xanthomonas oryzae pv. oryzae (strain PXO99A).